Consider the following 356-residue polypeptide: 3-isopropylmalate dehydrogenase (356 aa).

An NAD(+)-binding site is contributed by 73–86 (GTQYDGLPREKRPE). R93, R103, R131, and D220 together coordinate substrate. Residues D220, D244, and D248 each coordinate Mg(2+). 278 to 290 (GSAPDIAGKGIAN) contacts NAD(+).

It belongs to the isocitrate and isopropylmalate dehydrogenases family. LeuB type 1 subfamily. Homodimer. Mg(2+) serves as cofactor. Requires Mn(2+) as cofactor.

The protein localises to the cytoplasm. It carries out the reaction (2R,3S)-3-isopropylmalate + NAD(+) = 4-methyl-2-oxopentanoate + CO2 + NADH. It participates in amino-acid biosynthesis; L-leucine biosynthesis; L-leucine from 3-methyl-2-oxobutanoate: step 3/4. Functionally, catalyzes the oxidation of 3-carboxy-2-hydroxy-4-methylpentanoate (3-isopropylmalate) to 3-carboxy-4-methyl-2-oxopentanoate. The product decarboxylates to 4-methyl-2 oxopentanoate. In Nitrosomonas europaea (strain ATCC 19718 / CIP 103999 / KCTC 2705 / NBRC 14298), this protein is 3-isopropylmalate dehydrogenase.